A 3184-amino-acid chain; its full sequence is Cilia and flagella-associated protein 47 (3184 aa).

In terms of domain architecture, Calponin-homology (CH) spans 1729-1851 (SDSERILLSW…LCVYLYERLP (123 aa)). The disordered stretch occupies residues 2491–2514 (RDEEESQEETDTEKDFSSQETPSD). The segment covering 2493 to 2502 (EEESQEETDT) has biased composition (acidic residues).

As to quaternary structure, interacts with CFAP65. As to expression, highly expressed in spermatzoa (at protein level).

It localises to the cytoplasm. Its subcellular location is the cytoskeleton. It is found in the flagellum basal body. In terms of biological role, plays a role in flagellar formation and sperm motility. In Mus musculus (Mouse), this protein is Cilia and flagella-associated protein 47.